A 343-amino-acid polypeptide reads, in one-letter code: Phosphate acyltransferase (343 aa).

This sequence belongs to the PlsX family. Homodimer. Probably interacts with PlsY.

It is found in the cytoplasm. It catalyses the reaction a fatty acyl-[ACP] + phosphate = an acyl phosphate + holo-[ACP]. Its pathway is lipid metabolism; phospholipid metabolism. In terms of biological role, catalyzes the reversible formation of acyl-phosphate (acyl-PO(4)) from acyl-[acyl-carrier-protein] (acyl-ACP). This enzyme utilizes acyl-ACP as fatty acyl donor, but not acyl-CoA. This chain is Phosphate acyltransferase, found in Coxiella burnetii (strain CbuG_Q212) (Coxiella burnetii (strain Q212)).